A 292-amino-acid chain; its full sequence is Acetyl-coenzyme A carboxylase carboxyl transferase subunit beta (292 aa).

Residues 29–292 (LWVKCSECGQ…HGVKDLMGAN (264 aa)) enclose the CoA carboxyltransferase N-terminal domain. Positions 33, 36, 52, and 55 each coordinate Zn(2+). Residues 33–55 (CSECGQVAYRKDLISNFNVCSNC) form a C4-type zinc finger.

The protein belongs to the AccD/PCCB family. In terms of assembly, acetyl-CoA carboxylase is a heterohexamer composed of biotin carboxyl carrier protein (AccB), biotin carboxylase (AccC) and two subunits each of ACCase subunit alpha (AccA) and ACCase subunit beta (AccD). The cofactor is Zn(2+).

The protein resides in the cytoplasm. It catalyses the reaction N(6)-carboxybiotinyl-L-lysyl-[protein] + acetyl-CoA = N(6)-biotinyl-L-lysyl-[protein] + malonyl-CoA. Its pathway is lipid metabolism; malonyl-CoA biosynthesis; malonyl-CoA from acetyl-CoA: step 1/1. Functionally, component of the acetyl coenzyme A carboxylase (ACC) complex. Biotin carboxylase (BC) catalyzes the carboxylation of biotin on its carrier protein (BCCP) and then the CO(2) group is transferred by the transcarboxylase to acetyl-CoA to form malonyl-CoA. This chain is Acetyl-coenzyme A carboxylase carboxyl transferase subunit beta, found in Prochlorococcus marinus (strain MIT 9515).